We begin with the raw amino-acid sequence, 319 residues long: ATP-dependent 6-phosphofructokinase (319 aa).

Residues glycine 10, 71–72 (RS), and 101–104 (GDGS) each bind ATP. Aspartate 102 contacts Mg(2+). A substrate-binding site is contributed by 125-127 (TID). Aspartate 127 acts as the Proton acceptor in catalysis. Arginine 154 is a binding site for ADP. Substrate contacts are provided by residues arginine 162 and 169–171 (MGR). ADP is bound at residue 185-187 (GAE). Substrate contacts are provided by residues glutamate 223, arginine 244, and 250–253 (HVQR).

The protein belongs to the phosphofructokinase type A (PFKA) family. ATP-dependent PFK group I subfamily. Prokaryotic clade 'B1' sub-subfamily. As to quaternary structure, homotetramer. It depends on Mg(2+) as a cofactor.

It is found in the cytoplasm. It catalyses the reaction beta-D-fructose 6-phosphate + ATP = beta-D-fructose 1,6-bisphosphate + ADP + H(+). It participates in carbohydrate degradation; glycolysis; D-glyceraldehyde 3-phosphate and glycerone phosphate from D-glucose: step 3/4. Allosterically activated by ADP and other diphosphonucleosides, and allosterically inhibited by phosphoenolpyruvate. Functionally, catalyzes the phosphorylation of D-fructose 6-phosphate to fructose 1,6-bisphosphate by ATP, the first committing step of glycolysis. The chain is ATP-dependent 6-phosphofructokinase from Wolinella succinogenes (strain ATCC 29543 / DSM 1740 / CCUG 13145 / JCM 31913 / LMG 7466 / NCTC 11488 / FDC 602W) (Vibrio succinogenes).